We begin with the raw amino-acid sequence, 89 residues long: Small ribosomal subunit protein uS14 (89 aa).

It belongs to the universal ribosomal protein uS14 family. As to quaternary structure, part of the 30S ribosomal subunit. Contacts proteins S3 and S10.

In terms of biological role, binds 16S rRNA, required for the assembly of 30S particles and may also be responsible for determining the conformation of the 16S rRNA at the A site. This is Small ribosomal subunit protein uS14 from Flavobacterium johnsoniae (strain ATCC 17061 / DSM 2064 / JCM 8514 / BCRC 14874 / CCUG 350202 / NBRC 14942 / NCIMB 11054 / UW101) (Cytophaga johnsonae).